We begin with the raw amino-acid sequence, 63 residues long: Large ribosomal subunit protein bL32 (63 aa).

Belongs to the bacterial ribosomal protein bL32 family.

This chain is Large ribosomal subunit protein bL32, found in Lacticaseibacillus paracasei (strain ATCC 334 / BCRC 17002 / CCUG 31169 / CIP 107868 / KCTC 3260 / NRRL B-441) (Lactobacillus paracasei).